Reading from the N-terminus, the 149-residue chain is Arginine repressor (149 aa).

It belongs to the ArgR family.

It is found in the cytoplasm. Its pathway is amino-acid biosynthesis; L-arginine biosynthesis [regulation]. Regulates arginine biosynthesis genes. The polypeptide is Arginine repressor (Exiguobacterium sibiricum (strain DSM 17290 / CCUG 55495 / CIP 109462 / JCM 13490 / 255-15)).